The primary structure comprises 44 residues: Conotoxin Fi11.11 (44 aa).

4 disulfides stabilise this stretch: C1-C15, C8-C20, C14-C24, and C19-C28. N30 bears the Asparagine amide mark. Positions 35-44 (QVPLKSFGQR) are excised as a propeptide.

The protein belongs to the conotoxin I2 superfamily. In terms of tissue distribution, expressed by the venom duct.

It is found in the secreted. This chain is Conotoxin Fi11.11, found in Conus figulinus (Fig cone).